We begin with the raw amino-acid sequence, 389 residues long: tRNA-specific 2-thiouridylase MnmA (389 aa).

ATP is bound by residues 33–40 (GLSGGVDS) and L59. C120 (nucleophile) is an active-site residue. C120 and C219 are joined by a disulfide. G145 contributes to the ATP binding site. Residues 169-171 (KDQ) form an interaction with tRNA region. The Cysteine persulfide intermediate role is filled by C219. The interaction with tRNA stretch occupies residues 326–327 (RY).

It belongs to the MnmA/TRMU family.

It is found in the cytoplasm. The enzyme catalyses S-sulfanyl-L-cysteinyl-[protein] + uridine(34) in tRNA + AH2 + ATP = 2-thiouridine(34) in tRNA + L-cysteinyl-[protein] + A + AMP + diphosphate + H(+). Catalyzes the 2-thiolation of uridine at the wobble position (U34) of tRNA, leading to the formation of s(2)U34. This chain is tRNA-specific 2-thiouridylase MnmA, found in Synechococcus sp. (strain WH7803).